We begin with the raw amino-acid sequence, 539 residues long: Chaperonin GroEL (539 aa).

ATP-binding positions include 29 to 32, 86 to 90, Gly-413, 476 to 478, and Asp-492; these read TIGP, DGTTT, and NAA.

This sequence belongs to the chaperonin (HSP60) family. In terms of assembly, forms a cylinder of 14 subunits composed of two heptameric rings stacked back-to-back. Interacts with the co-chaperonin GroES.

The protein resides in the cytoplasm. It catalyses the reaction ATP + H2O + a folded polypeptide = ADP + phosphate + an unfolded polypeptide.. In terms of biological role, together with its co-chaperonin GroES, plays an essential role in assisting protein folding. The GroEL-GroES system forms a nano-cage that allows encapsulation of the non-native substrate proteins and provides a physical environment optimized to promote and accelerate protein folding. This is Chaperonin GroEL from Staphylococcus epidermidis.